A 148-amino-acid chain; its full sequence is Small ribosomal subunit protein eS19 (148 aa).

The protein belongs to the eukaryotic ribosomal protein eS19 family. As to quaternary structure, part of the 30S ribosomal subunit.

Its function is as follows. May be involved in maturation of the 30S ribosomal subunit. In Methanocaldococcus jannaschii (strain ATCC 43067 / DSM 2661 / JAL-1 / JCM 10045 / NBRC 100440) (Methanococcus jannaschii), this protein is Small ribosomal subunit protein eS19.